The primary structure comprises 473 residues: Cysteine--tRNA ligase (473 aa).

Cysteine 28 contacts Zn(2+). The 'HIGH' region motif lies at 30–40; it reads MTVYDYCHLGH. 3 residues coordinate Zn(2+): cysteine 209, histidine 234, and glutamate 238. A 'KMSKS' region motif is present at residues 282 to 286; sequence KMSKS. Lysine 285 provides a ligand contact to ATP.

It belongs to the class-I aminoacyl-tRNA synthetase family. In terms of assembly, monomer. It depends on Zn(2+) as a cofactor.

It is found in the cytoplasm. The catalysed reaction is tRNA(Cys) + L-cysteine + ATP = L-cysteinyl-tRNA(Cys) + AMP + diphosphate. The polypeptide is Cysteine--tRNA ligase (Neisseria meningitidis serogroup B (strain ATCC BAA-335 / MC58)).